The sequence spans 266 residues: Beta-lactamase OXA-10 (266 aa).

The signal sequence occupies residues 1 to 19 (MKTFAAYVIIACLSSTALA). A disulfide bond links Cys-44 and Cys-51. Residue Ser-67 is the Acyl-ester intermediate of the active site. N6-carboxylysine is present on Lys-70. Positions 115, 206, 208, and 250 each coordinate a beta-lactam.

The protein belongs to the class-D beta-lactamase family. In terms of assembly, dimer.

The protein localises to the periplasm. It catalyses the reaction a beta-lactam + H2O = a substituted beta-amino acid. Its activity is regulated as follows. Activated, with respect to most beta-lactam substrates, in the presence of 0.05 M sodium bicarbonate. Class D beta-lactamase which confers resistance to the beta-lactam antibiotics, including penicillin, carbenicillin and oxacillin, and also some cephalosporins. Confers weak resistance to some carbapenems, in E.coli strain C600Z1. Acts via hydrolysis of the beta-lactam ring. Has penicillin- and cephalosporin-hydrolyzing activities. In Pseudomonas aeruginosa, this protein is Beta-lactamase OXA-10.